Reading from the N-terminus, the 465-residue chain is Sperm microtubule associated protein 2-like (465 aa).

Positions 1-29 are enriched in polar residues; that stretch reads MENQEFLSSSAPSEVTDGQVSTEISTCSE. The interval 1 to 140 is disordered; that stretch reads MENQEFLSSS…REAKETELLP (140 aa). Basic and acidic residues-rich tracts occupy residues 40–70 and 114–137; these read LDTHRELEESEDPEKHENPEEPEEVREQDQR and KAREPRQLRHTREPRKSREAKETE. THEG repeat units follow at residues 174 to 192, 214 to 233, 260 to 279, 297 to 316, 333 to 352, 373 to 392, 409 to 428, and 446 to 465; these read RKCFSSRKRTPNLSKPKKQ, GALKAQLTKRLENLAQPKEV, PALFRQPSKRIQRLSQPNGF, SLRISDPSPRILQLSVAKGT, STLSAIATPRIIELAHPRIK, AAMIAKPSPRTIALAKSKSV, ATTHSKASPRIQELANPNKR, and AALKAQCSQRIWELSQPLTR.

This chain is Sperm microtubule associated protein 2-like, found in Homo sapiens (Human).